Here is a 271-residue protein sequence, read N- to C-terminus: DNA-directed RNA polymerase subunit Rpo3 (271 aa).

Belongs to the archaeal Rpo3/eukaryotic RPB3 RNA polymerase subunit family. Part of the RNA polymerase complex.

Its subcellular location is the cytoplasm. The catalysed reaction is RNA(n) + a ribonucleoside 5'-triphosphate = RNA(n+1) + diphosphate. DNA-dependent RNA polymerase (RNAP) catalyzes the transcription of DNA into RNA using the four ribonucleoside triphosphates as substrates. The polypeptide is DNA-directed RNA polymerase subunit Rpo3 (Thermoplasma volcanium (strain ATCC 51530 / DSM 4299 / JCM 9571 / NBRC 15438 / GSS1)).